A 293-amino-acid polypeptide reads, in one-letter code: Formamidopyrimidine-DNA glycosylase (293 aa).

The active-site Schiff-base intermediate with DNA is Pro-2. The Proton donor role is filled by Glu-3. Lys-60 serves as the catalytic Proton donor; for beta-elimination activity. DNA-binding residues include His-110, Arg-129, and Arg-174. Residues 259 to 293 (NVYRRTGKECRKCGNLIERKKISGRSTHWCPKCQK) form an FPG-type zinc finger. The active-site Proton donor; for delta-elimination activity is the Arg-283.

It belongs to the FPG family. In terms of assembly, monomer. The cofactor is Zn(2+).

It carries out the reaction Hydrolysis of DNA containing ring-opened 7-methylguanine residues, releasing 2,6-diamino-4-hydroxy-5-(N-methyl)formamidopyrimidine.. It catalyses the reaction 2'-deoxyribonucleotide-(2'-deoxyribose 5'-phosphate)-2'-deoxyribonucleotide-DNA = a 3'-end 2'-deoxyribonucleotide-(2,3-dehydro-2,3-deoxyribose 5'-phosphate)-DNA + a 5'-end 5'-phospho-2'-deoxyribonucleoside-DNA + H(+). Involved in base excision repair of DNA damaged by oxidation or by mutagenic agents. Acts as a DNA glycosylase that recognizes and removes damaged bases. Has a preference for oxidized purines, such as 7,8-dihydro-8-oxoguanine (8-oxoG). Has AP (apurinic/apyrimidinic) lyase activity and introduces nicks in the DNA strand. Cleaves the DNA backbone by beta-delta elimination to generate a single-strand break at the site of the removed base with both 3'- and 5'-phosphates. This chain is Formamidopyrimidine-DNA glycosylase, found in Prochlorococcus marinus (strain MIT 9215).